Here is a 196-residue protein sequence, read N- to C-terminus: Ribosomal RNA large subunit methyltransferase E (196 aa).

S-adenosyl-L-methionine is bound by residues Gly50, Trp52, Asp70, Asp87, and Asp112. Lys152 serves as the catalytic Proton acceptor.

It belongs to the class I-like SAM-binding methyltransferase superfamily. RNA methyltransferase RlmE family.

The protein localises to the cytoplasm. It carries out the reaction uridine(2552) in 23S rRNA + S-adenosyl-L-methionine = 2'-O-methyluridine(2552) in 23S rRNA + S-adenosyl-L-homocysteine + H(+). Functionally, specifically methylates the uridine in position 2552 of 23S rRNA at the 2'-O position of the ribose in the fully assembled 50S ribosomal subunit. This is Ribosomal RNA large subunit methyltransferase E from Bdellovibrio bacteriovorus (strain ATCC 15356 / DSM 50701 / NCIMB 9529 / HD100).